A 387-amino-acid chain; its full sequence is Patatin-12 (387 aa).

A signal peptide spans Met-1–Ala-23. A PNPLA domain is found at Leu-32–Leu-230. The short motif at Gly-36–Gly-41 is the GXGXXG element. Positions Gly-75 to Gly-79 match the GXSXG motif. The Nucleophile role is filled by Ser-77. N-linked (GlcNAc...) asparagine glycosylation is present at Asn-115. The active-site Proton acceptor is the Asp-216. The DGA/G signature appears at Asp-216–Gly-218. The stretch at Glu-322–Ala-385 forms a coiled coil.

This sequence belongs to the patatin family. Tuber.

Its subcellular location is the vacuole. Probable lipolytic acyl hydrolase (LAH), an activity which is thought to be involved in the response of tubers to pathogens. This Solanum tuberosum (Potato) protein is Patatin-12.